Consider the following 255-residue polypeptide: Carboxy-S-adenosyl-L-methionine synthase (255 aa).

Residues Tyr45, 70–72, 124–125, and Asn139 contribute to the S-adenosyl-L-methionine site; these read GCS and DI.

It belongs to the class I-like SAM-binding methyltransferase superfamily. Cx-SAM synthase family. Homodimer.

The catalysed reaction is prephenate + S-adenosyl-L-methionine = carboxy-S-adenosyl-L-methionine + 3-phenylpyruvate + H2O. Catalyzes the conversion of S-adenosyl-L-methionine (SAM) to carboxy-S-adenosyl-L-methionine (Cx-SAM). This chain is Carboxy-S-adenosyl-L-methionine synthase, found in Hamiltonella defensa subsp. Acyrthosiphon pisum (strain 5AT).